We begin with the raw amino-acid sequence, 565 residues long: DNA-dependent metalloprotease SPRTN (565 aa).

The 108-residue stretch at 23–130 (RALFLEFNDT…RTGANISVYH (108 aa)) folds into the SprT-like domain. His88 contacts Zn(2+). Residue Glu89 is part of the active site. Zn(2+) contacts are provided by His92 and His107. Residues 191 to 219 (EPENYPQKRKRKNDPTISEVNSSSHVKGK) form a disordered region. Positions 205-215 (PTISEVNSSSH) are enriched in polar residues. The SHP-box motif lies at 231–239 (FSGTGYKLF). Residues 288–295 (STPAQSIL) carry the PIP-box motif. The interval 349 to 389 (TLPSPSIQSTSQKPQKDISFGFTLPSQSFPSTSPGSNSENK) is disordered. Composition is skewed to polar residues over residues 351 to 361 (PSPSIQSTSQK) and 372 to 386 (LPSQ…GSNS). Residues 436–463 (KVSCPVCGTEVLECKINDHLDTCTSSGP) form a UBZ4-type 1 zinc finger. Residues Cys439, Cys442, His454, and Cys458 each contribute to the Zn(2+) site. A Nuclear localization signal motif is present at residues 476–499 (QSFPSTSQGSNSAIKEPLYKKLQI). The UBZ4-type 2 zinc-finger motif lies at 537–564 (KVCCPVCGTDVLQDKINDHLDTCLQNCN). 4 residues coordinate Zn(2+): Cys540, Cys543, His555, and Cys559.

Belongs to the Spartan family. As to quaternary structure, homodimer. Requires Zn(2+) as cofactor. Post-translationally, autocatalytically cleaved in response to double-stranded DNA-binding: autocatalytic cleavage takes place in trans and leads to inactivation.

It localises to the nucleus. It is found in the chromosome. Its activity is regulated as follows. DNA-binding activates the protease activity: single-stranded DNA-binding specifically activates ability to cleave covalent DNA-protein cross-links (DPCs). In contrast, double-stranded DNA-binding specifically activates autocatalytic cleavage, and subsequent inactivation. DNA-dependent metalloendopeptidase that mediates the proteolytic cleavage of covalent DNA-protein cross-links (DPCs) during DNA synthesis, thereby playing a key role in maintaining genomic integrity. DPCs are highly toxic DNA lesions that interfere with essential chromatin transactions, such as replication and transcription, and which are induced by reactive agents, such as UV light or formaldehyde. Associates with the DNA replication machinery and specifically removes DPCs during DNA synthesis. Catalyzes proteolytic cleavage of the hmces DNA-protein cross-link following unfolding by the brip1/fancj helicase. Acts as a pleiotropic protease for DNA-binding proteins cross-linked with DNA, such as top1, top2a, histones H3 and H4. Mediates degradation of DPCs that are not ubiquitinated, while it is not able to degrade ubiquitinated DPCs. SPRTN activation requires polymerase collision with DPCs followed by helicase bypass of DPCs. May also act as a 'reader' of ubiquitinated pcna: facilitates chromatin association of rad18 and is required for efficient pcna monoubiquitination, promoting a feed-forward loop to enhance pcna ubiquitination and translesion DNA synthesis. Acts as a regulator of translesion DNA synthesis by recruiting vcp/p97 to sites of DNA damage. The sequence is that of DNA-dependent metalloprotease SPRTN from Xenopus laevis (African clawed frog).